The primary structure comprises 77 residues: Large ribosomal subunit protein bL31 (77 aa).

The protein belongs to the bacterial ribosomal protein bL31 family. Type A subfamily. Part of the 50S ribosomal subunit.

Functionally, binds the 23S rRNA. The sequence is that of Large ribosomal subunit protein bL31 from Microcystis aeruginosa (strain NIES-843 / IAM M-2473).